Reading from the N-terminus, the 539-residue chain is Propionyl-CoA carboxylase beta chain, mitochondrial (539 aa).

A mitochondrion-targeting transit peptide spans 1–28 (MAAALRVAAVGARLSVLASGLRAAVRSL). Residues 32–290 (ATSVNERIEN…SSQDPAPVRE (259 aa)) enclose the CoA carboxyltransferase N-terminal domain. The tract at residues 32–533 (ATSVNERIEN…SKKVQRPWRK (502 aa)) is carboxyltransferase. At serine 71 the chain carries Phosphoserine. Lysine 99 is subject to N6-acetyllysine; alternate. Lysine 99 is subject to N6-succinyllysine; alternate. Lysine 248 bears the N6-succinyllysine mark. The CoA carboxyltransferase C-terminal domain maps to 294 to 533 (PSDRLVPELD…SKKVQRPWRK (240 aa)). An acyl-CoA binding region spans residues 325–358 (DEREFFEIMPNYAKNIIVGFARMNGRTVGIVGNQ). 2 positions are modified to N6-acetyllysine; alternate: lysine 474 and lysine 489. An N6-succinyllysine; alternate mark is found at lysine 474 and lysine 489.

The protein belongs to the AccD/PCCB family. In terms of assembly, the holoenzyme is a dodecamer composed of 6 PCCA/alpha subunits and 6 PCCB/beta subunits.

It localises to the mitochondrion matrix. It catalyses the reaction propanoyl-CoA + hydrogencarbonate + ATP = (S)-methylmalonyl-CoA + ADP + phosphate + H(+). It carries out the reaction butanoyl-CoA + hydrogencarbonate + ATP = (2S)-ethylmalonyl-CoA + ADP + phosphate + H(+). It participates in metabolic intermediate metabolism; propanoyl-CoA degradation; succinyl-CoA from propanoyl-CoA: step 1/3. Its function is as follows. This is one of the 2 subunits of the biotin-dependent propionyl-CoA carboxylase (PCC), a mitochondrial enzyme involved in the catabolism of odd chain fatty acids, branched-chain amino acids isoleucine, threonine, methionine, and valine and other metabolites. Propionyl-CoA carboxylase catalyzes the carboxylation of propionyl-CoA/propanoyl-CoA to D-methylmalonyl-CoA/(S)-methylmalonyl-CoA. Within the holoenzyme, the alpha subunit catalyzes the ATP-dependent carboxylation of the biotin carried by the biotin carboxyl carrier (BCC) domain, while the beta subunit then transfers the carboxyl group from carboxylated biotin to propionyl-CoA. Propionyl-CoA carboxylase also significantly acts on butyryl-CoA/butanoyl-CoA, which is converted to ethylmalonyl-CoA/(2S)-ethylmalonyl-CoA at a much lower rate. Other alternative minor substrates include (2E)-butenoyl-CoA/crotonoyl-CoA. This chain is Propionyl-CoA carboxylase beta chain, mitochondrial, found in Homo sapiens (Human).